The chain runs to 660 residues: ATP-dependent zinc metalloprotease FtsH (660 aa).

A disordered region spans residues 1–20; the sequence is MMPSSQRPSPRGSRQSPSPD. Over 1–24 the chain is Cytoplasmic; it reads MMPSSQRPSPRGSRQSPSPDQRGR. Residues 25 to 45 traverse the membrane as a helical segment; that stretch reads IAFAILATLVVAVLLLTLFSH. Topologically, residues 46-118 are extracellular; it reads APSGQPLGYS…VQVSYITPGP (73 aa). Residues 119–139 traverse the membrane as a helical segment; sequence GIASTIIEYVIFFGIFIGIWV. The Cytoplasmic portion of the chain corresponds to 140-660; that stretch reads YLTRRTQGSV…ASHDDTDPVS (521 aa). 213–220 provides a ligand contact to ATP; that stretch reads GPPGTGKT. Position 435 (H435) interacts with Zn(2+). E436 is a catalytic residue. H439 and D511 together coordinate Zn(2+).

This sequence in the central section; belongs to the AAA ATPase family. The protein in the C-terminal section; belongs to the peptidase M41 family. As to quaternary structure, homohexamer. The cofactor is Zn(2+).

Its subcellular location is the cell membrane. Acts as a processive, ATP-dependent zinc metallopeptidase for both cytoplasmic and membrane proteins. Plays a role in the quality control of integral membrane proteins. The protein is ATP-dependent zinc metalloprotease FtsH of Acidimicrobium ferrooxidans (strain DSM 10331 / JCM 15462 / NBRC 103882 / ICP).